The following is a 160-amino-acid chain: Cytochrome b6-f complex subunit 4 (160 aa).

A run of 3 helical transmembrane segments spans residues 36 to 56 (LLYIFPVVIFGTIACNVGLAV), 95 to 115 (LLGVLLMAAVPAGLLTVPFLE), and 131 to 151 (TVFLFGTVVALWLGIGAALPI).

This sequence belongs to the cytochrome b family. PetD subfamily. In terms of assembly, the 4 large subunits of the cytochrome b6-f complex are cytochrome b6, subunit IV (17 kDa polypeptide, petD), cytochrome f and the Rieske protein, while the 4 small subunits are petG, petL, petM and petN. The complex functions as a dimer.

It localises to the plastid. The protein localises to the chloroplast thylakoid membrane. Functionally, component of the cytochrome b6-f complex, which mediates electron transfer between photosystem II (PSII) and photosystem I (PSI), cyclic electron flow around PSI, and state transitions. The protein is Cytochrome b6-f complex subunit 4 of Spirogyra maxima (Green alga).